The sequence spans 269 residues: Tryptophan synthase alpha chain (269 aa).

Residues Glu-54 and Asp-65 each act as proton acceptor in the active site.

Belongs to the TrpA family. In terms of assembly, tetramer of two alpha and two beta chains.

The catalysed reaction is (1S,2R)-1-C-(indol-3-yl)glycerol 3-phosphate + L-serine = D-glyceraldehyde 3-phosphate + L-tryptophan + H2O. Its pathway is amino-acid biosynthesis; L-tryptophan biosynthesis; L-tryptophan from chorismate: step 5/5. In terms of biological role, the alpha subunit is responsible for the aldol cleavage of indoleglycerol phosphate to indole and glyceraldehyde 3-phosphate. This chain is Tryptophan synthase alpha chain, found in Synechococcus sp. (strain CC9902).